A 283-amino-acid chain; its full sequence is Small ribosomal subunit protein uS2B (283 aa).

A disordered region spans residues 254-283 (GQVGQSAWDEEGDWNTTGAAQTSDWANTVA). Residues 267–283 (WNTTGAAQTSDWANTVA) are compositionally biased toward polar residues.

The protein belongs to the universal ribosomal protein uS2 family. Component of the small ribosomal subunit. Mature ribosomes consist of a small (40S) and a large (60S) subunit. The 40S subunit contains about 33 different proteins and 1 molecule of RNA (18S). The 60S subunit contains about 49 different proteins and 3 molecules of RNA (25S, 5.8S and 5S). Interacts with rps21.

The protein resides in the cytoplasm. Functionally, required for the assembly and/or stability of the 40S ribosomal subunit. Required for the processing of the 20S rRNA-precursor to mature 18S rRNA in a late step of the maturation of 40S ribosomal subunits. The sequence is that of Small ribosomal subunit protein uS2B (rps0b) from Schizosaccharomyces japonicus (strain yFS275 / FY16936) (Fission yeast).